The following is a 568-amino-acid chain: Oxygen-dependent choline dehydrogenase (568 aa).

An FAD-binding site is contributed by 6 to 35 (DYIIVGAGSAGCVLADRLSASGEHYILLLE). His470 functions as the Proton acceptor in the catalytic mechanism.

It belongs to the GMC oxidoreductase family. It depends on FAD as a cofactor.

It carries out the reaction choline + A = betaine aldehyde + AH2. It catalyses the reaction betaine aldehyde + NAD(+) + H2O = glycine betaine + NADH + 2 H(+). It participates in amine and polyamine biosynthesis; betaine biosynthesis via choline pathway; betaine aldehyde from choline (cytochrome c reductase route): step 1/1. Involved in the biosynthesis of the osmoprotectant glycine betaine. Catalyzes the oxidation of choline to betaine aldehyde and betaine aldehyde to glycine betaine at the same rate. This chain is Oxygen-dependent choline dehydrogenase, found in Photobacterium profundum (strain SS9).